The primary structure comprises 616 residues: Dihydroxy-acid dehydratase (616 aa).

D81 contributes to the Mg(2+) binding site. [2Fe-2S] cluster is bound at residue C122. D123 and K124 together coordinate Mg(2+). N6-carboxylysine is present on K124. Position 195 (C195) interacts with [2Fe-2S] cluster. E491 serves as a coordination point for Mg(2+). S517 functions as the Proton acceptor in the catalytic mechanism.

Belongs to the IlvD/Edd family. Homodimer. Requires [2Fe-2S] cluster as cofactor. Mg(2+) serves as cofactor.

It catalyses the reaction (2R)-2,3-dihydroxy-3-methylbutanoate = 3-methyl-2-oxobutanoate + H2O. It carries out the reaction (2R,3R)-2,3-dihydroxy-3-methylpentanoate = (S)-3-methyl-2-oxopentanoate + H2O. Its pathway is amino-acid biosynthesis; L-isoleucine biosynthesis; L-isoleucine from 2-oxobutanoate: step 3/4. The protein operates within amino-acid biosynthesis; L-valine biosynthesis; L-valine from pyruvate: step 3/4. Functionally, functions in the biosynthesis of branched-chain amino acids. Catalyzes the dehydration of (2R,3R)-2,3-dihydroxy-3-methylpentanoate (2,3-dihydroxy-3-methylvalerate) into 2-oxo-3-methylpentanoate (2-oxo-3-methylvalerate) and of (2R)-2,3-dihydroxy-3-methylbutanoate (2,3-dihydroxyisovalerate) into 2-oxo-3-methylbutanoate (2-oxoisovalerate), the penultimate precursor to L-isoleucine and L-valine, respectively. This Escherichia coli O8 (strain IAI1) protein is Dihydroxy-acid dehydratase.